Here is a 1249-residue protein sequence, read N- to C-terminus: Voltage-dependent calcium channel unc-36 (1249 aa).

The N-terminal stretch at 1–19 (MRVVHLLVVLATYVSTTSS) is a signal peptide. At 20-1228 (FNKESIKECA…SENERRPCST (1209 aa)) the chain is on the extracellular side. N-linked (GlcNAc...) asparagine glycosylation is found at Asn-100, Asn-140, Asn-146, Asn-302, Asn-520, Asn-558, Asn-757, Asn-838, Asn-903, Asn-923, and Asn-1130. The region spanning 250–479 (NVLIMLDMSG…EKIHHYIRRM (230 aa)) is the VWFA domain. The chain crosses the membrane as a helical span at residues 1229–1248 (SPTIVSIFQILFGVFLHFCI). Position 1249 (Phe-1249) is a topological domain, cytoplasmic.

Decendants of the cells AB and AB.p (that give rise to nearly all non-pharyngeal neurons), decendants of P1 (that give rise to body muscle) and cell lineages that give rise to the adult and juvenile motor neurons. Expressed in body wall, vulval muscle and pharyngeal muscle.

The protein localises to the membrane. In terms of biological role, may act as an auxiliary subunit of the unc-2 voltage-gated calcium channel which appears to trigger calcium-activated signaling pathways that control the serotonin response. Inhibiting serotonin sensitivity of the vulval muscles results in egg laying defects. May act in both neurons and muscle cells to enhance motor activity as it is required for coordinated movement. Has a role in neural depolarization-induced calcium influx and pharyngeal pumping. Involved in restricting the expression of the putative olfactory receptor str-2 to only one of the two AWC neurons. This Caenorhabditis elegans protein is Voltage-dependent calcium channel unc-36 (unc-36).